The following is a 159-amino-acid chain: IQSTSMDQGILTEDSMNSFIRTLIQAGIWKNKLPKQTARTKDGMQTTVKRTEAEADAMASKGFQPIVSVDAELLRQQRRFSSPRVLLSENAPLEPPPLYLTEEPLVQNRTSRRKREGKRHRGEYSVCDSESRWVTDKSSAVDIRGHQVTVLGEIRMGPS.

The signal sequence occupies residues 1-3 (IQS). Residues 4 to 115 (TSMDQGILTE…VQNRTSRRKR (112 aa)) constitute a propeptide that is removed on maturation. The tract at residues 91–129 (APLEPPPLYLTEEPLVQNRTSRRKREGKRHRGEYSVCDS) is disordered. A glycan (N-linked (GlcNAc...) asparagine) is linked at asparagine 108. The segment covering 110–121 (TSRRKREGKRHR) has biased composition (basic residues).

This sequence belongs to the NGF-beta family.

It localises to the secreted. Functionally, seems to promote the survival of visceral and proprioceptive sensory neurons. This Candoia carinata (Papuan tree boa) protein is Neurotrophin-3 (NTF3).